Here is a 451-residue protein sequence, read N- to C-terminus: Chromosomal replication initiator protein DnaA (451 aa).

The interval 1-94 is domain I, interacts with DnaA modulators; sequence MKPDLSSLWQ…KPEPKPAQPS (94 aa). The tract at residues 87–106 is disordered; it reads EPKPAQPSALPTHHNKEENK. Residues 95–113 are domain II; that stretch reads ALPTHHNKEENKPQTVIRS. The segment at 114–331 is domain III, AAA+ region; it reads YLNPKHVFEN…GALNRVSANA (218 aa). Residues Gly-159, Gly-161, Lys-162, and Thr-163 each coordinate ATP. Residues 332-451 form a domain IV, binds dsDNA region; that stretch reads EFMGAAITID…WSNLIRTLSV (120 aa).

Belongs to the DnaA family. As to quaternary structure, oligomerizes as a right-handed, spiral filament on DNA at oriC.

The protein localises to the cytoplasm. In terms of biological role, plays an essential role in the initiation and regulation of chromosomal replication. ATP-DnaA binds to the origin of replication (oriC) to initiate formation of the DNA replication initiation complex once per cell cycle. Binds the DnaA box (a 9 base pair repeat at the origin) and separates the double-stranded (ds)DNA. Forms a right-handed helical filament on oriC DNA; dsDNA binds to the exterior of the filament while single-stranded (ss)DNA is stabiized in the filament's interior. The ATP-DnaA-oriC complex binds and stabilizes one strand of the AT-rich DNA unwinding element (DUE), permitting loading of DNA polymerase. After initiation quickly degrades to an ADP-DnaA complex that is not apt for DNA replication. Binds acidic phospholipids. The chain is Chromosomal replication initiator protein DnaA from Pasteurella multocida (strain Pm70).